The following is a 400-amino-acid chain: Protection of telomeres homolog 1 (400 aa).

It belongs to the telombin family. In terms of tissue distribution, expressed in sperm and oocytes.

Its subcellular location is the nucleus. The protein resides in the nucleus envelope. It localises to the chromosome. It is found in the telomere. Its function is as follows. Telomeric DNA-binding protein, which binds to single-stranded C-rich repeat sequences, with high specificity to the 5'-GCCTAA-3' sequence. Repeat sequence binding can be at the 5' or 3' telomeric end. May have a role in protecting the 5' end of the C-rich strand of the telomere. Acts redundantly with pot-2 to negatively regulate telomerase-mediated telomere extension. Also regulates telomere length by the telomerase-independent telomere maintenance pathway called ALT (alternative lengthening of telomeres). Through sun-1, anchors telomeres to the nuclear envelope in embryos. The polypeptide is Protection of telomeres homolog 1 (Caenorhabditis elegans).